Here is a 374-residue protein sequence, read N- to C-terminus: Low-specificity L-threonine aldolase (374 aa).

At lysine 213 the chain carries N6-(pyridoxal phosphate)lysine. The segment at 354 to 374 (HPHKDDGRNNKKMYSLDAIKK) is disordered.

It belongs to the threonine aldolase family. In terms of assembly, homotetramer. It depends on pyridoxal 5'-phosphate as a cofactor.

It carries out the reaction L-threonine = acetaldehyde + glycine. The enzyme catalyses L-allo-threonine = acetaldehyde + glycine. It functions in the pathway amino-acid degradation; L-threonine degradation via aldolase pathway; acetaldehyde and glycine from L-threonine: step 1/1. This is Low-specificity L-threonine aldolase (GLY1) from Candida albicans (Yeast).